The primary structure comprises 348 residues: Phosphate acyltransferase (348 aa).

The protein belongs to the PlsX family. In terms of assembly, homodimer. Probably interacts with PlsY.

The protein localises to the cytoplasm. The enzyme catalyses a fatty acyl-[ACP] + phosphate = an acyl phosphate + holo-[ACP]. It functions in the pathway lipid metabolism; phospholipid metabolism. Functionally, catalyzes the reversible formation of acyl-phosphate (acyl-PO(4)) from acyl-[acyl-carrier-protein] (acyl-ACP). This enzyme utilizes acyl-ACP as fatty acyl donor, but not acyl-CoA. This is Phosphate acyltransferase from Rhizorhabdus wittichii (strain DSM 6014 / CCUG 31198 / JCM 15750 / NBRC 105917 / EY 4224 / RW1) (Sphingomonas wittichii).